The chain runs to 99 residues: DNA-directed RNA polymerase subunit omega (99 aa).

It belongs to the RNA polymerase subunit omega family. The RNAP catalytic core consists of 2 alpha, 1 beta, 1 beta' and 1 omega subunit. When a sigma factor is associated with the core the holoenzyme is formed, which can initiate transcription.

It carries out the reaction RNA(n) + a ribonucleoside 5'-triphosphate = RNA(n+1) + diphosphate. In terms of biological role, promotes RNA polymerase assembly. Latches the N- and C-terminal regions of the beta' subunit thereby facilitating its interaction with the beta and alpha subunits. This Xanthomonas axonopodis pv. citri (strain 306) protein is DNA-directed RNA polymerase subunit omega.